A 59-amino-acid polypeptide reads, in one-letter code: Large ribosomal subunit protein uL30 (59 aa).

This sequence belongs to the universal ribosomal protein uL30 family. As to quaternary structure, part of the 50S ribosomal subunit.

This chain is Large ribosomal subunit protein uL30, found in Bacillus subtilis (strain 168).